A 144-amino-acid chain; its full sequence is Putative pre-16S rRNA nuclease (144 aa).

The protein belongs to the YqgF nuclease family.

It is found in the cytoplasm. In terms of biological role, could be a nuclease involved in processing of the 5'-end of pre-16S rRNA. The chain is Putative pre-16S rRNA nuclease from Oleidesulfovibrio alaskensis (strain ATCC BAA-1058 / DSM 17464 / G20) (Desulfovibrio alaskensis).